The sequence spans 367 residues: MDIIEELRAYREKDIPYSRVLSSMCTVPHPVAVEAHRMFIETNLGDPGIFRGTVELEAKLMRLIGDILHCETPAGYICSGGTEANIQGIRAARNVQKKENPNIVIPKTAHFSFEKIGDILGVKIKRAGVDEEYKVDVGQVEDLMDENTVAIVGIAGTTELGQIDPIVELSKLAEERQVELHVDAAFGGLVIPFMDNPYPFDFQNRGVSSITIDPHKMGMATIPAGGIIFRNESYLRALEVETPYLTSKTQFTLTGTRPGTGVASAYAVLKSLGFEGMREVVKNCLKNTRILVEEMRDLGFEPVIEPVMNVVSFRTDEAERIKEELYRMRWVISTIREPKAIRFVVMPHVTEEVIKNFISDFRKVLRR.

The residue at position 216 (lysine 216) is an N6-(pyridoxal phosphate)lysine.

This sequence belongs to the group II decarboxylase family. MfnA subfamily. It depends on pyridoxal 5'-phosphate as a cofactor.

It catalyses the reaction L-aspartate + H(+) = beta-alanine + CO2. Its pathway is cofactor biosynthesis; coenzyme A biosynthesis. Its function is as follows. Catalyzes the decarboxylation of L-aspartate to produce beta-alanine. The sequence is that of Probable L-aspartate decarboxylase from Archaeoglobus fulgidus (strain ATCC 49558 / DSM 4304 / JCM 9628 / NBRC 100126 / VC-16).